The sequence spans 406 residues: Argininosuccinate synthase (406 aa).

ATP-binding positions include 12–20 and Ala39; that span reads AYSGGLDTS. The L-citrulline site is built by Tyr90 and Ser95. Residue Gly120 coordinates ATP. L-aspartate is bound by residues Thr122, Asn126, and Asp127. Asn126 is an L-citrulline binding site. L-citrulline is bound by residues Arg130, Ser179, Ser188, Glu264, and Tyr276.

Belongs to the argininosuccinate synthase family. Type 1 subfamily. Homotetramer.

It localises to the cytoplasm. It carries out the reaction L-citrulline + L-aspartate + ATP = 2-(N(omega)-L-arginino)succinate + AMP + diphosphate + H(+). It participates in amino-acid biosynthesis; L-arginine biosynthesis; L-arginine from L-ornithine and carbamoyl phosphate: step 2/3. This chain is Argininosuccinate synthase, found in Geobacter sp. (strain M21).